The following is a 103-amino-acid chain: Large ribosomal subunit protein bL21 (103 aa).

Residues 83 to 92 (YRRKKGHRQP) show a composition bias toward basic residues. Residues 83 to 103 (YRRKKGHRQPFSRVTVEKIEA) are disordered.

Belongs to the bacterial ribosomal protein bL21 family. Part of the 50S ribosomal subunit. Contacts protein L20.

This protein binds to 23S rRNA in the presence of protein L20. This Pelotomaculum thermopropionicum (strain DSM 13744 / JCM 10971 / SI) protein is Large ribosomal subunit protein bL21.